We begin with the raw amino-acid sequence, 553 residues long: ATP synthase F(1) complex subunit alpha, mitochondrial (553 aa).

Residues 1–43 (MLSVRVAAAVVRALPRRAGLVSRNALGSSFIAARNFHASNTHL) constitute a mitochondrion transit peptide. 2 positions are modified to phosphoserine: serine 53 and serine 65. A Phosphoserine; alternate modification is found at serine 76. A glycan (O-linked (GlcNAc) serine; alternate) is linked at serine 76. Serine 106 carries the phosphoserine modification. Residues lysine 123, lysine 126, and lysine 132 each carry the N6-acetyllysine modification. Threonine 134 is modified (phosphothreonine). Lysine 161 is modified (N6-acetyllysine; alternate). Lysine 161 bears the N6-succinyllysine; alternate mark. Serine 166 carries the post-translational modification Phosphoserine. Lysine 167 is modified (N6-acetyllysine; alternate). Lysine 167 is modified (N6-succinyllysine; alternate). Serine 184 carries the phosphoserine modification. Arginine 204 is subject to Omega-N-methylarginine. Glutamine 215, glycine 217, lysine 218, threonine 219, and serine 220 together coordinate ATP. Threonine 219 is a binding site for Mg(2+). Residues lysine 230 and lysine 239 each carry the N6-acetyllysine; alternate modification. An N6-succinyllysine; alternate mark is found at lysine 230 and lysine 239. Lysine 240 is subject to N6-acetyllysine. Lysine 261 and lysine 305 each carry N6-acetyllysine; alternate. N6-succinyllysine; alternate is present on residues lysine 261 and lysine 305. Mg(2+) is bound at residue aspartate 312. An N6-acetyllysine; alternate modification is found at lysine 427. Lysine 427 carries the post-translational modification N6-succinyllysine; alternate. An N6-acetyllysine modification is found at lysine 434. Residues glutamine 473 and glutamine 475 each coordinate ATP. N6-acetyllysine; alternate occurs at positions 498, 506, 531, and 539. 4 positions are modified to N6-succinyllysine; alternate: lysine 498, lysine 506, lysine 531, and lysine 539. Residue lysine 541 is modified to N6-acetyllysine.

It belongs to the ATPase alpha/beta chains family. In terms of assembly, homotrimer. Component of the ATP synthase complex composed at least of ATP5F1A/subunit alpha, ATP5F1B/subunit beta, ATP5MC1/subunit c (homooctomer), MT-ATP6/subunit a, MT-ATP8/subunit 8, ATP5ME/subunit e, ATP5MF/subunit f, ATP5MG/subunit g, ATP5MK/subunit k, ATP5MJ/subunit j, ATP5F1C/subunit gamma, ATP5F1D/subunit delta, ATP5F1E/subunit epsilon, ATP5PF/subunit F6, ATP5PB/subunit b, ATP5PD/subunit d, ATP5PO/subunit OSCP. ATP synthase complex consists of a soluble F(1) head domain (subunits alpha(3) and beta(3)) - the catalytic core - and a membrane F(0) domain - the membrane proton channel (subunits c, a, 8, e, f, g, k and j). These two domains are linked by a central stalk (subunits gamma, delta, and epsilon) rotating inside the F1 region and a stationary peripheral stalk (subunits F6, b, d, and OSCP). Interacts with ATPAF2. Interacts with HRG; the interaction occurs on the surface of T-cells and alters the cell morphology when associated with concanavalin (in vitro). Interacts with PLG (angiostatin peptide); the interaction inhibits most of the angiogenic properties of angiostatin. Interacts with BLOC1S1. Interacts with BCL2L1 isoform BCL-X(L); the interaction mediates the association of BCL2L1 isoform BCL-X(L) with the mitochondrial membrane F(1)F(0) ATP synthase and enhances neurons metabolic efficiency. Interacts with CLN5 and PPT1. Interacts with S100A1; this interaction increases F1-ATPase activity. Interacts with ABCB7; this interaction allows the regulation of cellular iron homeostasis and cellular reactive oxygen species (ROS) levels in cardiomyocytes. Post-translationally, acetylated on lysine residues. BLOC1S1 is required for acetylation.

It localises to the mitochondrion inner membrane. Its subcellular location is the cell membrane. In terms of biological role, subunit alpha, of the mitochondrial membrane ATP synthase complex (F(1)F(0) ATP synthase or Complex V) that produces ATP from ADP in the presence of a proton gradient across the membrane which is generated by electron transport complexes of the respiratory chain. ATP synthase complex consist of a soluble F(1) head domain - the catalytic core - and a membrane F(1) domain - the membrane proton channel. These two domains are linked by a central stalk rotating inside the F(1) region and a stationary peripheral stalk. During catalysis, ATP synthesis in the catalytic domain of F(1) is coupled via a rotary mechanism of the central stalk subunits to proton translocation. In vivo, can only synthesize ATP although its ATP hydrolase activity can be activated artificially in vitro. With the catalytic subunit beta (ATP5F1B), forms the catalytic core in the F(1) domain. Subunit alpha does not bear the catalytic high-affinity ATP-binding sites. The chain is ATP synthase F(1) complex subunit alpha, mitochondrial from Pan troglodytes (Chimpanzee).